The sequence spans 552 residues: Arginine--tRNA ligase (552 aa).

Positions 124 to 134 (GNPTGPLHLAH) match the 'HIGH' region motif.

This sequence belongs to the class-I aminoacyl-tRNA synthetase family. In terms of assembly, monomer.

It is found in the cytoplasm. It catalyses the reaction tRNA(Arg) + L-arginine + ATP = L-arginyl-tRNA(Arg) + AMP + diphosphate. This is Arginine--tRNA ligase from Tropheryma whipplei (strain Twist) (Whipple's bacillus).